The following is a 449-amino-acid chain: uncharacterized protein (449 aa).

Residues 3-61 (VWQQGATIELRIDSLSHTGEGVGRWQDRVVFVADTVPGDRLRVRLTHVKRQYAHGKVLE) enclose the TRAM domain. Residues Cys74, Cys80, Cys83, and Cys161 each contribute to the [4Fe-4S] cluster site. Residues Gln283, Tyr312, Glu333, and Asp378 each coordinate S-adenosyl-L-methionine. The active-site Nucleophile is Cys405.

It belongs to the class I-like SAM-binding methyltransferase superfamily. RNA M5U methyltransferase family.

This is an uncharacterized protein from Thermosynechococcus vestitus (strain NIES-2133 / IAM M-273 / BP-1).